Consider the following 354-residue polypeptide: uncharacterized protein (354 aa).

Disordered stretches follow at residues 1–74 and 87–115; these read MGTK…ENCR and SESGVCTEPEERGQGGKKSQFLPINQRAS. K19 carries the N6-acetyllysine modification. Low complexity predominate over residues 32-41; sequence EGPSSNSSFH. Acidic residues predominate over residues 45-54; the sequence is EEGTDLEGDM. Residues S115 and S174 each carry the phosphoserine modification. Residues 182 to 199 are compositionally biased toward polar residues; sequence QGSSQDLPMQANLSQSNE. 2 disordered regions span residues 182–208 and 235–298; these read QGSSQDLPMQANLSQSNEGPLLAGRDR and QVAD…DELS. The residue at position 291 (Y291) is a Phosphotyrosine. S292 bears the Phosphoserine mark.

This is an uncharacterized protein from Mus musculus (Mouse).